We begin with the raw amino-acid sequence, 237 residues long: UPF0280 protein Mpal_1292 (237 aa).

It belongs to the UPF0280 family.

The protein is UPF0280 protein Mpal_1292 of Methanosphaerula palustris (strain ATCC BAA-1556 / DSM 19958 / E1-9c).